Reading from the N-terminus, the 2403-residue chain is Highly reducing polyketide synthase fogA (2403 aa).

The region spanning 3–428 (DDPPCIVGMA…GANAHVILES (426 aa)) is the Ketosynthase family 3 (KS3) domain. Catalysis depends on for beta-ketoacyl synthase activity residues cysteine 176, histidine 311, and histidine 350. A malonyl-CoA:ACP transacylase (MAT) domain region spans residues 538–858 (VFTGQGAQYA…PYAPSLVRKE (321 aa)). The active-site For malonyltransferase activity is serine 632. The segment at 929–1068 (HELLGTFALT…GSIRVVEPLT (140 aa)) is N-terminal hotdog fold. Positions 929–1238 (HELLGTFALT…DARMSLYTGK (310 aa)) are dehydratase (DH) domain. The PKS/mFAS DH domain maps to 929-1241 (HELLGTFALT…MSLYTGKSSA (313 aa)). Histidine 961 (proton acceptor; for dehydratase activity) is an active-site residue. The interval 1084–1241 (SFEASPTNRW…MSLYTGKSSA (158 aa)) is C-terminal hotdog fold. Catalysis depends on aspartate 1152, which acts as the Proton donor; for dehydratase activity. The segment at 1663–1981 (GATDSMFFQQ…QQDRIGKIVI (319 aa)) is enoyl reductase (ER) domain. The ketoreductase (KR) domain stretch occupies residues 2006-2185 (VYLLIGCLGG…AVAVGLGMIS (180 aa)). Positions 2280 to 2300 (AQNSTSSSGSNSNTPTTAAPW) are disordered. Low complexity predominate over residues 2282 to 2296 (NSTSSSGSNSNTPTT). Positions 2320-2398 (SLNAAILRLI…GLAVVVEGKL (79 aa)) constitute a Carrier domain. Serine 2357 is modified (O-(pantetheine 4'-phosphoryl)serine).

Pantetheine 4'-phosphate serves as cofactor.

It functions in the pathway secondary metabolite biosynthesis. In terms of biological role, highly reducing polyketide synthase; part of the gene cluster that mediates the biosynthesis of flavoglaucin and congeners (including aspergin, dihydroauroglaucin and auroglaucin), prenylated salicylaldehyde derivatives carrying a saturated or an unsaturated C-7 side chain. FogA releases the carboxylic acid (8E,10E,12E)-3,5,7-trihydroxytetradeca-8,10,12-trienoic acid as its product, as well as derivatives with one and two double bonds. FogA is indeed able to reduce the initial triketide, thus being at least partially responsible for the differently saturated heptyl side chains of flavoglaucin congeners. The oxidoreductases fogB, fogC and fogD modify the nascent polyketide in fogA-bound form and, together, fogA, fogB, fogC and fogD are necessary for the formation of the aromatic core and the cyclized PKS products are released as salicyl alcohols. In particular, fogB is responsible for oxidation of a hydroxyl group or reduction of remaining double bond(s) at the C-7 residue whereas fogD is probably involved in the reductive release of the modified PKS products. The cytochrome P450 monooxygenase fogE is then responsible for the hydroxylation at C-3 of the benzene ring. The fogE products are substrates of the prenyltransferase fogH and the prenylated benzyl alcohols are subsequently oxidized by the fogF to produce the final aryl aldehydes flavoglaucin and congeners. The short-chain dehydrogenase fogG does not seem to be involved in the biosynthesis of the prenylated salicylaldehyde derivatives. The polypeptide is Highly reducing polyketide synthase fogA (Aspergillus ruber (strain CBS 135680)).